The chain runs to 626 residues: Protein PCF11 (626 aa).

The segment at 1–130 (MDHDTEVIVK…PLFEGSALEK (130 aa)) is interaction with RBP1 CTD (CID). The CID domain occupies 4-139 (DTEVIVKDFN…KIEQFLIKAS (136 aa)). Residues 263–286 (SYTQNSNSAIPLFGNNSDTTNQQN) form a disordered region.

As to quaternary structure, component of the CFIA complex, which is composed of RNA14, RNA15, PCF11 and CLP1. Interacts with RNA14, RNA15 and RTT103. Interacts directly with the phosphorylated CTD domain of RPB1/RNA polymerase II.

The protein resides in the nucleus. Functionally, component of the cleavage factor IA (CFIA) complex, which is involved in the endonucleolytic cleavage during polyadenylation-dependent pre-mRNA 3'-end formation and cooperates with cleavage factor NAB4/CFIB and the cleavage and polyadenylation factor (CPF) complex. Independently involved in RNA polymerase II transcript termination. Binds RNA. Seems to bridge RNA polymerase II and the native transcript and may be involved in dismantling the RNA polymerase II elongation complex. The polypeptide is Protein PCF11 (PCF11) (Saccharomyces cerevisiae (strain ATCC 204508 / S288c) (Baker's yeast)).